The primary structure comprises 308 residues: MGKWTGKKVAVLYGGRSSEREVSLRTGAACADALRARGHDVTLVDVDAELPARLRELRVDVAFVALHGRWGEDGCVQGLLECMGIPYTGSGVTASAMGMDKTVSKAIFKALGLDVIEYRAFPPARAAEIDLRDLPFGVPCVVKPAGEGSSVGVQIVKDAARLADACREAARYKGDVVVERYVKGTEVNVAVLEGKALGAIEIAPANEFYDYAAKYTAGTTRYYYPARIPEAHASRVMAAAEAAHRGLGCSGVTRVDFIVAPDGTPFILEVNTLPGMTATSLVPKIAAGLGLAFPELCERILDGAALKA.

In terms of domain architecture, ATP-grasp spans 105 to 302; sequence KAIFKALGLD…FPELCERILD (198 aa). Residue 133 to 188 coordinates ATP; that stretch reads DLPFGVPCVVKPAGEGSSVGVQIVKDAARLADACREAARYKGDVVVERYVKGTEVN. Residues aspartate 256, glutamate 269, and asparagine 271 each contribute to the Mg(2+) site.

It belongs to the D-alanine--D-alanine ligase family. Mg(2+) serves as cofactor. Mn(2+) is required as a cofactor.

Its subcellular location is the cytoplasm. It carries out the reaction 2 D-alanine + ATP = D-alanyl-D-alanine + ADP + phosphate + H(+). It participates in cell wall biogenesis; peptidoglycan biosynthesis. Cell wall formation. In Anaeromyxobacter sp. (strain Fw109-5), this protein is D-alanine--D-alanine ligase.